Here is a 547-residue protein sequence, read N- to C-terminus: MAMGLFRVCLVVVTAIINHPLLFPRENATVPENEEEIIRKMQAHQEKLQLEQLRLEEEVARLAAEKEALEQVAEEGRQQNETRVAWDLWSTLCMILFLMIEVWRQDHQEGPSPECLGGEEDELPGLGGAPLQGLTLPNKATLGHFYERCIRGATADAARTREFLEGFVDDLLEALRSLCNRDTDMEVEDFIGVDSMYENWQVDRPLLCHLFVPFTPPEPYRFHPELWCSGRSVPLDRQGYGQIKVVRADGDTLSCICGKTKLGEDMLCLLHGRNSMAPPCGDMENLLCATDSLYLDTMQVMKWFQTALTRAWKGIAHKYEFDLAFGQLDSPGSLKIKFRSGKFMPFNLIPVIQCDDSDLYFVSHLPREPSEGTPASSTDWLLSFAVYERHFLRTTLKALPEGACHLSCLQIASFLLSKQSRLTGPSGLSSYHLKTALLHLLLLRQAADWKAGQLDARLHELLCFLEKSLLQKKLHHFFIGNRKVPEAMGLPEAVLRAEPLNLFRPFVLQRSLYRKTLDSFYEMLKNAPALISEYSLHVPSDQPTPKS.

The signal sequence occupies residues 1-15; that stretch reads MAMGLFRVCLVVVTA. Residues 16–83 are Extracellular-facing; the sequence is IINHPLLFPR…EEGRQQNETR (68 aa). N-linked (GlcNAc...) asparagine glycosylation is found at Asn27 and Asn80. Residues 32–82 are a coiled coil; that stretch reads ENEEEIIRKMQAHQEKLQLEQLRLEEEVARLAAEKEALEQVAEEGRQQNET. Residues 84-100 form a helical membrane-spanning segment; the sequence is VAWDLWSTLCMILFLMI. Over 101 to 547 the chain is Cytoplasmic; it reads EVWRQDHQEG…VPSDQPTPKS (447 aa). Residues 109 to 129 form a disordered region; that stretch reads EGPSPECLGGEEDELPGLGGA. Ser547 carries the post-translational modification Phosphoserine.

This sequence belongs to the ITPRIP family. In terms of assembly, interacts with ITPR. Detected in brain where it is concentrated in cerebellar Purkinje cells (at protein level).

The protein localises to the cell membrane. It localises to the nucleus outer membrane. In terms of biological role, enhances Ca(2+)-mediated inhibition of inositol 1,4,5-triphosphate receptor (ITPR) Ca(2+) release. In Homo sapiens (Human), this protein is Inositol 1,4,5-trisphosphate receptor-interacting protein (ITPRIP).